The sequence spans 120 residues: Large ribosomal subunit protein uL22 (120 aa).

It belongs to the universal ribosomal protein uL22 family. As to quaternary structure, part of the 50S ribosomal subunit.

In terms of biological role, this protein binds specifically to 23S rRNA; its binding is stimulated by other ribosomal proteins, e.g. L4, L17, and L20. It is important during the early stages of 50S assembly. It makes multiple contacts with different domains of the 23S rRNA in the assembled 50S subunit and ribosome. The globular domain of the protein is located near the polypeptide exit tunnel on the outside of the subunit, while an extended beta-hairpin is found that lines the wall of the exit tunnel in the center of the 70S ribosome. This is Large ribosomal subunit protein uL22 from Rippkaea orientalis (strain PCC 8801 / RF-1) (Cyanothece sp. (strain PCC 8801)).